A 188-amino-acid chain; its full sequence is dCTP deaminase (188 aa).

DCTP-binding positions include 111–116, 135–137, Gln156, Tyr170, and Gln180; these read KSTYAR and TLE. The active-site Proton donor/acceptor is the Glu137.

It belongs to the dCTP deaminase family. As to quaternary structure, homotrimer.

The enzyme catalyses dCTP + H2O + H(+) = dUTP + NH4(+). It functions in the pathway pyrimidine metabolism; dUMP biosynthesis; dUMP from dCTP (dUTP route): step 1/2. Functionally, catalyzes the deamination of dCTP to dUTP. The sequence is that of dCTP deaminase from Acidithiobacillus ferrooxidans (strain ATCC 23270 / DSM 14882 / CIP 104768 / NCIMB 8455) (Ferrobacillus ferrooxidans (strain ATCC 23270)).